The sequence spans 331 residues: Cytosolic sulfotransferase 1 (331 aa).

Position 74 to 79 (74 to 79 (KSGTTW)) interacts with 3'-phosphoadenylyl sulfate. The active-site Proton acceptor is the His-143. 3'-phosphoadenylyl sulfate contacts are provided by residues Arg-165, Ser-173, Tyr-231, and 297–299 (RKG).

This sequence belongs to the sulfotransferase 1 family.

Its subcellular location is the cytoplasm. Functionally, sulfotransferase that utilizes 3'-phospho-5'-adenylyl sulfate (PAPS) as sulfonate donor. In Arabidopsis thaliana (Mouse-ear cress), this protein is Cytosolic sulfotransferase 1 (SOT1).